A 1148-amino-acid chain; its full sequence is Envelopment polyprotein (1148 aa).

The first 23 residues, 1-23 (MGKSSPVCLYLILQGLLLFDTVN), serve as a signal peptide directing secretion. Residues 24 to 496 (AKNLNELKME…PGLHGWATVL (473 aa)) lie on the Lumenal side of the membrane. Cystine bridges form between cysteine 34–cysteine 159, cysteine 68–cysteine 165, cysteine 117–cysteine 136, cysteine 141–cysteine 146, cysteine 183–cysteine 193, and cysteine 218–cysteine 257. Residue asparagine 142 is glycosylated (N-linked (GlcNAc...) asparagine; by host). Asparagine 357 carries an N-linked (GlcNAc...) asparagine; by host glycan. Disulfide bonds link cysteine 386–cysteine 445, cysteine 390–cysteine 399, cysteine 415–cysteine 434, and cysteine 462–cysteine 485. The N-linked (GlcNAc...) asparagine; by host glycan is linked to asparagine 409. A helical membrane pass occupies residues 497–517 (LLLTFCFGWVLIPTITMILLK). Residues 518–637 (ILIAFAYLCS…LSLFRYRSRF (120 aa)) lie on the Cytoplasmic side of the membrane. A binding to the ribonucleoprotein region spans residues 526-543 (CSKYNTDSKFRILVEKVK). 2 consecutive CCHC-type zinc fingers follow at residues 555 to 575 (CEVC…RKSC) and 580 to 601 (CPYC…FKVC). Binding to the ribonucleoprotein regions lie at residues 598 to 615 (FKVC…KKSL) and 621 to 635 (MQGC…RYRS). Positions 621–644 (MQGCYRTLSLFRYRSRFFVGLVWC) constitute an ITAM domain. A YxxL motif is present at residues 625 to 628 (YRTL). A helical membrane pass occupies residues 638-658 (FVGLVWCMLLVLELIVWAASA). Residues 659–1115 (ETQNLNDGWT…WVLGVLNGNW (457 aa)) are Lumenal-facing. 8 disulfides stabilise this stretch: cysteine 745–cysteine 780, cysteine 749–cysteine 787, cysteine 761–cysteine 894, cysteine 775–cysteine 905, cysteine 790–cysteine 913, cysteine 816–cysteine 825, cysteine 833–cysteine 842, and cysteine 873–cysteine 877. Residues 767–787 (YEYETGWGCNPPDCPGVGTGC) form a fusion loop region. N-linked (GlcNAc...) asparagine; by host glycosylation is present at asparagine 937. Cystine bridges form between cysteine 979-cysteine 1009, cysteine 1002-cysteine 1054, cysteine 1019-cysteine 1024, cysteine 1055-cysteine 1060, and cysteine 1094-cysteine 1098. Residues 1116-1136 (MVVAVLIALLILSIFLFALCC) traverse the membrane as a helical segment. The binding to the ribonucleoprotein stretch occupies residues 1131-1148 (LFALCCPRRPSYKKDHKP). Topologically, residues 1137–1148 (PRRPSYKKDHKP) are cytoplasmic.

This sequence belongs to the hantavirus envelope glycoprotein family. Homodimer. Homotetramer; forms heterotetrameric Gn-Gc spikes in the pre-fusion conformation. Interacts (via C-terminus) with the nucleoprotein. Interacts with host TUFM; this interaction contributes to the virus-induced degradation of mitochondria by autophagy, which leads to degradation of host MAVS and inhibition of type I interferon (IFN) responses. Interacts with host MAP1LC3B; this interaction contributes to the virus-induced degradation of mitochondria by autophagy, which leads to degradation of host MAVS and inhibition of type I interferon (IFN) responses. As to quaternary structure, homodimer. Homotetramer; forms heterotetrameric Gn-Gc spikes in the pre-fusion conformation. Homotrimer; forms homotrimer in the post-fusion conformation at acidic pH. Interacts (via C-terminus) with the nucleoprotein. Envelope polyprotein precursor is quickly cleaved in vivo just after synthesis, presumably by host signal peptidase.

It is found in the virion membrane. Its subcellular location is the host cell surface. The protein localises to the host Golgi apparatus membrane. The protein resides in the host endoplasmic reticulum membrane. It localises to the host mitochondrion. In terms of biological role, forms homotetramers with glycoprotein C at the surface of the virion. Attaches the virion to host cell receptors including integrin ITGAV/ITGB3. This attachment induces virion internalization predominantly through clathrin-dependent endocytosis. Mediates the assembly and budding of infectious virus particles through its interaction with the nucleocapsid protein and the viral genome. May dysregulate normal immune and endothelial cell responses through an ITAM motif. Translocates to mitochondria, binds to host TUFM and recruits MAP1LC3B. These interactions induce mitochondrial autophagy and therefore destruction of host MAVS leading to inhibition of type I interferon (IFN) responses. Concomitant breakdown of glycoprotein N is apparently prevented by the nucleoprotein that may inhibit Gn-stimulated autophagosome-lysosome fusion. Interacts with the viral genomic RNA. Forms heterooctamers with glycoprotein N at the surface of the virion. Attaches the virion to host cell receptors including integrin ITGAV/ITGB3. This attachment induces virion internalization predominantly through clathrin-dependent endocytosis. Class II fusion protein that promotes fusion of viral membrane with host endosomal membrane after endocytosis of the virion. In Homo sapiens (Human), this protein is Envelopment polyprotein (GP).